The primary structure comprises 374 residues: MKFAWLLAPDTYWDEKKTFITAALESGIDHIVDTADSGRIKKLGNLTLISPDEDADIVLVGRDGEGDGTLELPETLEYSRDIEMASELSESGRQVAAYVEIRSKAHEELARRLGRVVDYLILVGEDWKIIPLENIIADLQEEDVKLIAAVADVDEARVALETLEHGTDGVLIEPADISQIKDIAALLENIESETYELKPATITRIEPIGSGDRVCVDTCSIMGIGEGMLVGSYSQGLFLVHSESLESEYVASRPFRVNAGPVQAYVMVPGGRTRYLSELETGDEVIIVDRDGRSRSAIVGRVKIEKRPLMLVEAEYEGMKVRTLLQNAETIRLVNDKGEPVSVSELGEGDRVLVYFDESARHFGMAIKETIIEK.

This sequence belongs to the archaeal-type DHQ synthase family.

The catalysed reaction is 2-amino-2,3,7-trideoxy-D-lyxo-hept-6-ulosonate + NAD(+) + H2O = 3-dehydroquinate + NH4(+) + NADH + H(+). Catalyzes the oxidative deamination and cyclization of 2-amino-3,7-dideoxy-D-threo-hept-6-ulosonic acid (ADH) to yield 3-dehydroquinate (DHQ), which is fed into the canonical shikimic pathway of aromatic amino acid biosynthesis. This Methanothermobacter thermautotrophicus (strain ATCC 29096 / DSM 1053 / JCM 10044 / NBRC 100330 / Delta H) (Methanobacterium thermoautotrophicum) protein is 3-dehydroquinate synthase.